Here is a 31-residue protein sequence, read N- to C-terminus: GCIPVGSMCTISNGCCTKNCGWNFHCNKPNQ.

Cystine bridges form between C2-C16, C9-C20, and C15-C26. P29 is modified (4-hydroxyproline).

The protein belongs to the nemertide family. In terms of tissue distribution, confined to the epidermis and to the mucus layer.

The protein resides in the secreted. In terms of biological role, potent toxin, demonstrating strong inhibitory effects on insect sodium channels (Nav) and reduced activity on mammalian sodium channels. Potently inhibits inactivation of insect sodium channels of B.germanica (BgNav1) (EC(50)=9.5 nM). The toxin also delays the inactivation of most mammalian Nav (human Nav1.1/SCN1A; EC(50)=171.5 nM, rat Nav1.2/SCN2A; EC(50)=50.4 nM, rat Nav1.3/SCN3A; EC(50)=170.2 nM, rat Nav1.4/SCN4A; EC(50)=810.6 nM, human Nav1.5/SCN5A; EC(50)=155.6 nM, mouse Nav1.6/SCN8A; EC(50)=147.6 nM, human Nav1.9/SCN9A; EC(50)=129 nM). Inactivation is completely prevented by a concentration of 1 uM, resulting in sustained, non-inactivating currents. In addition, the toxin significantly enhances the recovery from inactivation, and the open state is not required for the toxin to interact with the channel. In vivo, injection into brine shrimp (Artemia salina) stops movement or causes death after 24 hours (EC(50)=6.1 uM). The polypeptide is Nemertide alpha-7 (Lineus ruber (Red bootlace)).